Here is a 213-residue protein sequence, read N- to C-terminus: Thiamine-phosphate synthase (213 aa).

Residues 41 to 45 (QFRVK) and Asn73 each bind 4-amino-2-methyl-5-(diphosphooxymethyl)pyrimidine. Asp74 and Asp93 together coordinate Mg(2+). Thr112 lines the 4-amino-2-methyl-5-(diphosphooxymethyl)pyrimidine pocket. 139–141 (SAT) provides a ligand contact to 2-[(2R,5Z)-2-carboxy-4-methylthiazol-5(2H)-ylidene]ethyl phosphate. Lys142 lines the 4-amino-2-methyl-5-(diphosphooxymethyl)pyrimidine pocket. Gly171 serves as a coordination point for 2-[(2R,5Z)-2-carboxy-4-methylthiazol-5(2H)-ylidene]ethyl phosphate.

It belongs to the thiamine-phosphate synthase family. The cofactor is Mg(2+).

The catalysed reaction is 2-[(2R,5Z)-2-carboxy-4-methylthiazol-5(2H)-ylidene]ethyl phosphate + 4-amino-2-methyl-5-(diphosphooxymethyl)pyrimidine + 2 H(+) = thiamine phosphate + CO2 + diphosphate. It catalyses the reaction 2-(2-carboxy-4-methylthiazol-5-yl)ethyl phosphate + 4-amino-2-methyl-5-(diphosphooxymethyl)pyrimidine + 2 H(+) = thiamine phosphate + CO2 + diphosphate. The enzyme catalyses 4-methyl-5-(2-phosphooxyethyl)-thiazole + 4-amino-2-methyl-5-(diphosphooxymethyl)pyrimidine + H(+) = thiamine phosphate + diphosphate. It functions in the pathway cofactor biosynthesis; thiamine diphosphate biosynthesis; thiamine phosphate from 4-amino-2-methyl-5-diphosphomethylpyrimidine and 4-methyl-5-(2-phosphoethyl)-thiazole: step 1/1. Its function is as follows. Condenses 4-methyl-5-(beta-hydroxyethyl)thiazole monophosphate (THZ-P) and 2-methyl-4-amino-5-hydroxymethyl pyrimidine pyrophosphate (HMP-PP) to form thiamine monophosphate (TMP). In Erythrobacter litoralis (strain HTCC2594), this protein is Thiamine-phosphate synthase.